The following is a 509-amino-acid chain: Methylmalonyl-CoA decarboxylase subunit alpha (509 aa).

The region spanning 4-260 (VQEKIELLHE…NNMEDAPLVD (257 aa)) is the CoA carboxyltransferase N-terminal domain. Residues 267 to 503 (REDESLNSLL…SKRENRAPKK (237 aa)) form the CoA carboxyltransferase C-terminal domain.

Belongs to the AccD/PCCB family. As to quaternary structure, the methylmalonyl-CoA decarboxylase is composed of five subunits: the carboxyltransferase alpha subunit (MmdA), the tunnel beta subunit (MmdB), the biotin-containing gamma subunit (MmdC), and the delta (MmdD) and epsilon (MmdE) subunits. Interacts with the gamma subunit.

The protein localises to the cell membrane. The enzyme catalyses (S)-methylmalonyl-CoA + Na(+)(in) + H(+)(out) = propanoyl-CoA + Na(+)(out) + CO2. With respect to regulation, completely inhibited by avidin. Functionally, carboxyltransferase subunit of the sodium ion pump methylmalonyl-CoA decarboxylase, which converts the chemical energy of a decarboxylation reaction into an electrochemical gradient of Na(+) ions across the cytoplasmic membrane, thereby creating a sodium ion motive force that is used for ATP synthesis. The alpha subunit catalyzes the Na(+)-independent carboxyltransfer from methylmalonyl-CoA to the prosthetic biotin group located on the gamma subunit. Can also convert malonyl-CoA into acetyl-CoA. This Veillonella parvula (Staphylococcus parvulus) protein is Methylmalonyl-CoA decarboxylase subunit alpha.